Reading from the N-terminus, the 366-residue chain is Ribosomal RNA large subunit methyltransferase M (366 aa).

S-adenosyl-L-methionine contacts are provided by residues serine 188, 221–224 (CPGG), aspartate 240, aspartate 260, and aspartate 277. The active-site Proton acceptor is the lysine 306.

Belongs to the class I-like SAM-binding methyltransferase superfamily. RNA methyltransferase RlmE family. RlmM subfamily. As to quaternary structure, monomer.

The protein localises to the cytoplasm. The enzyme catalyses cytidine(2498) in 23S rRNA + S-adenosyl-L-methionine = 2'-O-methylcytidine(2498) in 23S rRNA + S-adenosyl-L-homocysteine + H(+). In terms of biological role, catalyzes the 2'-O-methylation at nucleotide C2498 in 23S rRNA. The protein is Ribosomal RNA large subunit methyltransferase M of Pectobacterium carotovorum subsp. carotovorum (strain PC1).